The chain runs to 436 residues: Tol-Pal system protein TolB (436 aa).

Residues 1–28 form the signal peptide; sequence MEMLRRNFFRLLMVLVAGCGLIASPANA.

It belongs to the TolB family. As to quaternary structure, the Tol-Pal system is composed of five core proteins: the inner membrane proteins TolA, TolQ and TolR, the periplasmic protein TolB and the outer membrane protein Pal. They form a network linking the inner and outer membranes and the peptidoglycan layer.

It localises to the periplasm. Its function is as follows. Part of the Tol-Pal system, which plays a role in outer membrane invagination during cell division and is important for maintaining outer membrane integrity. This chain is Tol-Pal system protein TolB, found in Rhizobium meliloti (strain 1021) (Ensifer meliloti).